A 305-amino-acid polypeptide reads, in one-letter code: GTPase Era (305 aa).

One can recognise an Era-type G domain in the interval 13–181 (RCGFVAIVGR…ESAVGRFLPE (169 aa)). Positions 21–28 (GRPNVGKS) are G1. 21-28 (GRPNVGKS) provides a ligand contact to GTP. The tract at residues 47–51 (QTTRH) is G2. The segment at 68 to 71 (DTPG) is G3. GTP-binding positions include 68-72 (DTPGM) and 130-133 (NKVD). Positions 130–133 (NKVD) are G4. A G5 region spans residues 160-162 (LSA). One can recognise a KH type-2 domain in the interval 204–288 (VREKITRQLG…MLRLWVKVKR (85 aa)).

Belongs to the TRAFAC class TrmE-Era-EngA-EngB-Septin-like GTPase superfamily. Era GTPase family. In terms of assembly, monomer.

It is found in the cytoplasm. It localises to the cell inner membrane. Functionally, an essential GTPase that binds both GDP and GTP, with rapid nucleotide exchange. Plays a role in 16S rRNA processing and 30S ribosomal subunit biogenesis and possibly also in cell cycle regulation and energy metabolism. The protein is GTPase Era of Marinobacter nauticus (strain ATCC 700491 / DSM 11845 / VT8) (Marinobacter aquaeolei).